The chain runs to 364 residues: Aminomethyltransferase (364 aa).

Belongs to the GcvT family. In terms of assembly, the glycine cleavage system is composed of four proteins: P, T, L and H.

It catalyses the reaction N(6)-[(R)-S(8)-aminomethyldihydrolipoyl]-L-lysyl-[protein] + (6S)-5,6,7,8-tetrahydrofolate = N(6)-[(R)-dihydrolipoyl]-L-lysyl-[protein] + (6R)-5,10-methylene-5,6,7,8-tetrahydrofolate + NH4(+). Its function is as follows. The glycine cleavage system catalyzes the degradation of glycine. The protein is Aminomethyltransferase of Shigella sonnei (strain Ss046).